The chain runs to 342 residues: Phosphoribosylformylglycinamidine cyclo-ligase (342 aa).

The protein belongs to the AIR synthase family.

It is found in the cytoplasm. The catalysed reaction is 2-formamido-N(1)-(5-O-phospho-beta-D-ribosyl)acetamidine + ATP = 5-amino-1-(5-phospho-beta-D-ribosyl)imidazole + ADP + phosphate + H(+). The protein operates within purine metabolism; IMP biosynthesis via de novo pathway; 5-amino-1-(5-phospho-D-ribosyl)imidazole from N(2)-formyl-N(1)-(5-phospho-D-ribosyl)glycinamide: step 2/2. This chain is Phosphoribosylformylglycinamidine cyclo-ligase, found in Staphylococcus aureus (strain MSSA476).